Here is a 146-residue protein sequence, read N- to C-terminus: Snaclec 4 (146 aa).

The first 23 residues, 1–23, serve as a signal peptide directing secretion; the sequence is MGRFISISFGLLVVFLSLSGTEA. 3 cysteine pairs are disulfide-bonded: Cys-27–Cys-38, Cys-55–Cys-144, and Cys-121–Cys-136. The C-type lectin domain occupies 34 to 145; it reads YDQNCYKVFT…CNFIAPVVCK (112 aa).

It belongs to the snaclec family. As to quaternary structure, heterodimer; disulfide-linked.

The protein resides in the secreted. In terms of biological role, interferes with one step of hemostasis (modulation of platelet aggregation, or coagulation cascade, for example). This is Snaclec 4 from Daboia siamensis (Eastern Russel's viper).